Consider the following 38-residue polypeptide: Allatostatin-C (38 aa).

Residues 1–19 (MRRALDGPGSSSLDTRQAD) constitute a propeptide that is removed on maturation. Pyrrolidone carboxylic acid; partial is present on Gln22.

This sequence belongs to the allatostatin family. As to expression, in its non-pyroglutamate form, expressed in antennal lobe (AL), corpora cardiaca (CC), corpora allata (CA) and gnathal ganglion (GNG) with expression in AL detected in most animals and expression in CC, CA and GNG detected in few animals (at protein level). In its pyroglutamate form, expressed in antennal lobe (AL), corpora cardiaca (CC) and corpora allata (CA) with expression detected in few animals (at protein level). Not expressed in GNG (protein level).

It is found in the secreted. Its function is as follows. Strongly inhibits juvenile hormone biosynthesis. This chain is Allatostatin-C, found in Agrotis ipsilon (Black cutworm moth).